Reading from the N-terminus, the 172-residue chain is Shikimate kinase (172 aa).

14-19 (GAGKST) is an ATP binding site. Ser-18 is a Mg(2+) binding site. Substrate contacts are provided by Asp-36, Arg-60, and Gly-82. Arg-120 contacts ATP. Arg-139 contacts substrate. Gln-156 contributes to the ATP binding site.

Belongs to the shikimate kinase family. As to quaternary structure, monomer. It depends on Mg(2+) as a cofactor.

It is found in the cytoplasm. It carries out the reaction shikimate + ATP = 3-phosphoshikimate + ADP + H(+). Its pathway is metabolic intermediate biosynthesis; chorismate biosynthesis; chorismate from D-erythrose 4-phosphate and phosphoenolpyruvate: step 5/7. Functionally, catalyzes the specific phosphorylation of the 3-hydroxyl group of shikimic acid using ATP as a cosubstrate. This is Shikimate kinase from Vibrio vulnificus (strain CMCP6).